The primary structure comprises 143 residues: Hexaprenyl-diphosphate synthase small subunit ((2E,6E)-farnesyl-diphosphate specific) (143 aa).

As to quaternary structure, dimer of heterodimer or heterotetramer composed of a small (Hexs-a) and large (Hexs-B) subunit.

It carries out the reaction 3 isopentenyl diphosphate + (2E,6E)-farnesyl diphosphate = all-trans-hexaprenyl diphosphate + 3 diphosphate. Functionally, catalyzes the condensation of three molecules of isopentenyl diphosphate with farnesyl diphosphate (FPP) to yield (all-E)-hexaprenyl diphosphate (HexPP; C30), the precursor of the prenyl side chain of menaquinone-6. Large subunit Hexs-B catalyzes the condensation reaction and the final product chain length is cooperatively regulated by both the Hexs-A and Hexs-B subunits using the whole size of the hydrophobic cleft as a ruler. In Micrococcus luteus (Micrococcus lysodeikticus), this protein is Hexaprenyl-diphosphate synthase small subunit ((2E,6E)-farnesyl-diphosphate specific) (hexs-a).